The sequence spans 379 residues: uncharacterized protein (379 aa).

This is an uncharacterized protein from Sinorhizobium fredii (strain NBRC 101917 / NGR234).